Consider the following 450-residue polypeptide: Glucose-6-phosphate isomerase (450 aa).

Residue E291 is the Proton donor of the active site. Residues H312 and K426 contribute to the active site.

Belongs to the GPI family.

Its subcellular location is the cytoplasm. The catalysed reaction is alpha-D-glucose 6-phosphate = beta-D-fructose 6-phosphate. The protein operates within carbohydrate biosynthesis; gluconeogenesis. Its pathway is carbohydrate degradation; glycolysis; D-glyceraldehyde 3-phosphate and glycerone phosphate from D-glucose: step 2/4. Functionally, catalyzes the reversible isomerization of glucose-6-phosphate to fructose-6-phosphate. This is Glucose-6-phosphate isomerase from Clostridium botulinum (strain Langeland / NCTC 10281 / Type F).